The following is a 531-amino-acid chain: SWI/SNF-related matrix-associated actin-dependent regulator of chromatin subfamily D member 2 (531 aa).

Residues 20-85 (AVAAALGAPP…MSPGSRMPMA (66 aa)) are disordered. Positions 34–45 (PGMLPNPALRGP) are enriched in low complexity. Asymmetric dimethylarginine occurs at positions 81 and 104. Residues 202 to 226 (FSPSKADGDNSGTAGTPGGTPAADK) are disordered. Ser-203 is modified (phosphoserine). Thr-217 is modified (phosphothreonine). Lys-226 participates in a covalent cross-link: Glycyl lysine isopeptide (Lys-Gly) (interchain with G-Cter in SUMO2). An SWIB/MDM2 domain is found at 306-383 (HQPPQYKLDP…PMKLAGLLQH (78 aa)).

The protein belongs to the SMARCD family. In terms of assembly, component of the multiprotein chromatin-remodeling complexes SWI/SNF: SWI/SNF-A (BAF), SWI/SNF-B (PBAF) and related complexes. The canonical complex contains a catalytic subunit (either SMARCA4/BRG1/BAF190A or SMARCA2/BRM/BAF190B), and at least SMARCE1, ACTL6A/BAF53, SMARCC1/BAF155, SMARCC2/BAF170, and SMARCB1/SNF5/BAF47. Other subunits specific to each of the complexes may also be present permitting several possible combinations developmentally and tissue specific. Component of the BAF complex, which includes at least actin (ACTB), ARID1A/BAF250A, ARID1B/BAF250B, SMARCA2/BRM, SMARCA4/BRG1, ACTL6A/BAF53, ACTL6B/BAF53B, SMARCE1/BAF57, SMARCC1/BAF155, SMARCC2/BAF170, SMARCB1/SNF5/INI1, and one or more SMARCD1/BAF60A, SMARCD2/BAF60B, or SMARCD3/BAF60C. In muscle cells, the BAF complex also contains DPF3. Component of the SWI/SNF-B (PBAF) chromatin remodeling complex, at least composed of SMARCA4/BRG1, SMARCB1/BAF47/SNF5, ACTL6A/BAF53A or ACTL6B/BAF53B, SMARCE1/BAF57, SMARCD1/BAF60A, SMARCD2/BAF60B, perhaps SMARCD3/BAF60C, SMARCC1/BAF155, SMARCC2/BAF170, PBRM1/BAF180, ARID2/BAF200 and actin (ACTB). Interacts with UNKL. Interacts with CEBPE. Ubiquitinated through a signaling process involving RAC1 and the RING finger protein UNKL.

Its subcellular location is the nucleus. Functionally, involved in transcriptional activation and repression of select genes by chromatin remodeling (alteration of DNA-nucleosome topology). Component of SWI/SNF chromatin remodeling complexes that carry out key enzymatic activities, changing chromatin structure by altering DNA-histone contacts within a nucleosome in an ATP-dependent manner. Critical regulator of myeloid differentiation, controlling granulocytopoiesis and the expression of genes involved in neutrophil granule formation. This is SWI/SNF-related matrix-associated actin-dependent regulator of chromatin subfamily D member 2 (Smarcd2) from Rattus norvegicus (Rat).